Here is a 92-residue protein sequence, read N- to C-terminus: MTRSLKKVPFVAHHLWKKIESLNIKKEKRVIITWSRASTIVPGMIGHTIAVYNGREHLPIYVTDRMVGHKLGEFVLTRTFRGHARKDKKSRR.

This sequence belongs to the universal ribosomal protein uS19 family.

The protein resides in the plastid. Its subcellular location is the chloroplast. Functionally, protein S19 forms a complex with S13 that binds strongly to the 16S ribosomal RNA. The polypeptide is Small ribosomal subunit protein uS19c (Psilotum nudum (Whisk fern)).